A 241-amino-acid chain; its full sequence is F-box protein At3g22350 (241 aa).

Positions 1–44 constitute an F-box domain; it reads MSDLPLDLVEEILSRVSATSLKRLRSTCKQWNTLFKKRSFSQKH.

This is F-box protein At3g22350 from Arabidopsis thaliana (Mouse-ear cress).